The primary structure comprises 362 residues: HMG box-containing protein C19G7.04 (362 aa).

Residues 135 to 299 form the SprT-like domain; sequence KCFLARLEDE…RLCKSQIKQI (165 aa). The HMG box DNA-binding region spans 306–348; the sequence is PNAFQIFLKENSKRLRKLHPHITHKELMKKLSDEYHRTKDAKQ.

Its subcellular location is the nucleus. The protein localises to the cytoplasm. It localises to the cytoskeleton. It is found in the spindle. The protein is HMG box-containing protein C19G7.04 of Schizosaccharomyces pombe (strain 972 / ATCC 24843) (Fission yeast).